Here is a 101-residue protein sequence, read N- to C-terminus: Small ribosomal subunit protein bS18c (101 aa).

Residues 1-19 (MDKSKQLFRKSKRSFRRRL) are compositionally biased toward basic residues. Residues 1 to 23 (MDKSKQLFRKSKRSFRRRLPPIG) are disordered.

The protein belongs to the bacterial ribosomal protein bS18 family. As to quaternary structure, part of the 30S ribosomal subunit.

The protein localises to the plastid. Its subcellular location is the chloroplast. The protein is Small ribosomal subunit protein bS18c of Acorus calamus (Sweet flag).